The sequence spans 382 residues: Galactokinase (382 aa).

34–37 (EHTD) provides a ligand contact to substrate. 124–130 (GAGLSSS) contacts ATP. Serine 130 and glutamate 162 together coordinate Mg(2+). Aspartate 174 serves as the catalytic Proton acceptor. Tyrosine 223 lines the substrate pocket.

This sequence belongs to the GHMP kinase family. GalK subfamily.

The protein localises to the cytoplasm. It catalyses the reaction alpha-D-galactose + ATP = alpha-D-galactose 1-phosphate + ADP + H(+). The protein operates within carbohydrate metabolism; galactose metabolism. Catalyzes the transfer of the gamma-phosphate of ATP to D-galactose to form alpha-D-galactose-1-phosphate (Gal-1-P). The polypeptide is Galactokinase (Escherichia coli (strain SMS-3-5 / SECEC)).